A 195-amino-acid polypeptide reads, in one-letter code: Small ribosomal subunit protein uS10c (195 aa).

Residues 1-59 constitute a chloroplast transit peptide; sequence MATSSISAALLSPLTLRNASSSSTKQDFSTLSSLNLRRTLTPTLQSGHTLSNSSNFATF.

This sequence belongs to the universal ribosomal protein uS10 family. In terms of assembly, component of the chloroplast small ribosomal subunit (SSU). Mature 70S chloroplast ribosomes of higher plants consist of a small (30S) and a large (50S) subunit. The 30S small subunit contains 1 molecule of ribosomal RNA (16S rRNA) and 24 different proteins. The 50S large subunit contains 3 rRNA molecules (23S, 5S and 4.5S rRNA) and 33 different proteins.

The protein resides in the plastid. The protein localises to the chloroplast. Functionally, component of the chloroplast ribosome (chloro-ribosome), a dedicated translation machinery responsible for the synthesis of chloroplast genome-encoded proteins, including proteins of the transcription and translation machinery and components of the photosynthetic apparatus. In Spinacia oleracea (Spinach), this protein is Small ribosomal subunit protein uS10c (RPS10).